A 297-amino-acid chain; its full sequence is Lipoyl synthase (297 aa).

7 residues coordinate [4Fe-4S] cluster: Cys-37, Cys-42, Cys-48, Cys-63, Cys-67, Cys-70, and Ser-276. Positions 49-265 (WSRKHATVMI…ERIAKTKGFL (217 aa)) constitute a Radical SAM core domain.

It belongs to the radical SAM superfamily. Lipoyl synthase family. It depends on [4Fe-4S] cluster as a cofactor.

Its subcellular location is the cytoplasm. The enzyme catalyses [[Fe-S] cluster scaffold protein carrying a second [4Fe-4S](2+) cluster] + N(6)-octanoyl-L-lysyl-[protein] + 2 oxidized [2Fe-2S]-[ferredoxin] + 2 S-adenosyl-L-methionine + 4 H(+) = [[Fe-S] cluster scaffold protein] + N(6)-[(R)-dihydrolipoyl]-L-lysyl-[protein] + 4 Fe(3+) + 2 hydrogen sulfide + 2 5'-deoxyadenosine + 2 L-methionine + 2 reduced [2Fe-2S]-[ferredoxin]. It participates in protein modification; protein lipoylation via endogenous pathway; protein N(6)-(lipoyl)lysine from octanoyl-[acyl-carrier-protein]: step 2/2. Functionally, catalyzes the radical-mediated insertion of two sulfur atoms into the C-6 and C-8 positions of the octanoyl moiety bound to the lipoyl domains of lipoate-dependent enzymes, thereby converting the octanoylated domains into lipoylated derivatives. This is Lipoyl synthase from Rickettsia typhi (strain ATCC VR-144 / Wilmington).